We begin with the raw amino-acid sequence, 944 residues long: E3 ubiquitin-protein ligase HACE1 (944 aa).

ANK repeat units lie at residues 23-55 (LPED…NSKF), 64-93 (VKRS…DPNY), 97-126 (SGCT…DVNI), 130-159 (EGLT…NVDV), 163-192 (MGQT…DINR), 196-226 (SGAT…YLPD), and 228-253 (NGVT…QHHP). Positions 609–944 (NCEKLKQGIA…HCGSYGYTMA (336 aa)) constitute an HECT domain. The Glycyl thioester intermediate role is filled by cysteine 911.

The protein resides in the golgi apparatus. It localises to the golgi stack membrane. The protein localises to the cytoplasm. It is found in the endoplasmic reticulum. The enzyme catalyses S-ubiquitinyl-[E2 ubiquitin-conjugating enzyme]-L-cysteine + [acceptor protein]-L-lysine = [E2 ubiquitin-conjugating enzyme]-L-cysteine + N(6)-ubiquitinyl-[acceptor protein]-L-lysine.. It functions in the pathway protein modification; protein ubiquitination. In terms of biological role, E3 ubiquitin-protein ligase involved in Golgi membrane fusion and regulation of small GTPases. Acts as a regulator of Golgi membrane dynamics during the cell cycle: recruited to Golgi membrane by Rab proteins and regulates postmitotic Golgi membrane fusion. Acts by mediating ubiquitination during mitotic Golgi disassembly, ubiquitination serving as a signal for Golgi reassembly later, after cell division. In Xenopus laevis (African clawed frog), this protein is E3 ubiquitin-protein ligase HACE1 (hace1).